Consider the following 159-residue polypeptide: NADH-quinone oxidoreductase subunit B (159 aa).

[4Fe-4S] cluster contacts are provided by Cys-32, Cys-33, Cys-97, and Cys-126.

It belongs to the complex I 20 kDa subunit family. NDH-1 is composed of 14 different subunits. Subunits NuoB, C, D, E, F, and G constitute the peripheral sector of the complex. The cofactor is [4Fe-4S] cluster.

The protein resides in the cell inner membrane. It catalyses the reaction a quinone + NADH + 5 H(+)(in) = a quinol + NAD(+) + 4 H(+)(out). Functionally, NDH-1 shuttles electrons from NADH, via FMN and iron-sulfur (Fe-S) centers, to quinones in the respiratory chain. The immediate electron acceptor for the enzyme in this species is believed to be ubiquinone. Couples the redox reaction to proton translocation (for every two electrons transferred, four hydrogen ions are translocated across the cytoplasmic membrane), and thus conserves the redox energy in a proton gradient. This Helicobacter pylori (strain HPAG1) protein is NADH-quinone oxidoreductase subunit B.